We begin with the raw amino-acid sequence, 460 residues long: Probable Xaa-Pro aminopeptidase PEPP (460 aa).

Residues aspartate 256, aspartate 267, glutamate 390, and glutamate 430 each coordinate Mn(2+).

The protein belongs to the peptidase M24B family. The cofactor is Mn(2+).

It carries out the reaction Release of any N-terminal amino acid, including proline, that is linked to proline, even from a dipeptide or tripeptide.. In terms of biological role, catalyzes the removal of a penultimate prolyl residue from the N-termini of peptides. This chain is Probable Xaa-Pro aminopeptidase PEPP (PEPP), found in Podospora anserina (strain S / ATCC MYA-4624 / DSM 980 / FGSC 10383) (Pleurage anserina).